The primary structure comprises 308 residues: GTP-binding protein gtr1 (308 aa).

11 residues coordinate GTP: Ser-11, Gly-14, Lys-15, Ser-16, Ser-17, Thr-31, Thr-37, Gly-60, His-122, Asp-125, and Ile-159.

The protein belongs to the GTR/RAG GTP-binding protein family. In terms of assembly, component of the GSE complex.

It localises to the vacuole membrane. The protein resides in the cytoplasm. It is found in the nucleus. The catalysed reaction is GTP + H2O = GDP + phosphate + H(+). GTPase involved in activation of the TORC1 signaling pathway, which promotes growth and represses autophagy in nutrient-rich conditions. Also required for TORC1 inactivation during nitrogen starvation. This is GTP-binding protein gtr1 (gtr1) from Schizosaccharomyces pombe (strain 972 / ATCC 24843) (Fission yeast).